Here is a 238-residue protein sequence, read N- to C-terminus: Tetrahydromethanopterin S-methyltransferase subunit A 1 (238 aa).

The Cytoplasmic portion of the chain corresponds to 2 to 218 (VEKKSPAEGW…RMFAGMYSGK (217 aa)). Residue His84 coordinates 5-hydroxybenzimidazolylcob(I)amide. Residues 219–237 (VQGIMIGLAFTLTLGILLL) form a helical membrane-spanning segment. A topological domain (extracellular) is located at residue Val238.

Belongs to the MtrA family. The complex is composed of 8 subunits; MtrA, MtrB, MtrC, MtrD, MtrE, MtrF, MtrG and MtrH. 5-hydroxybenzimidazolylcob(I)amide is required as a cofactor.

It localises to the cell membrane. It catalyses the reaction 5-methyl-5,6,7,8-tetrahydromethanopterin + coenzyme M + 2 Na(+)(in) = 5,6,7,8-tetrahydromethanopterin + methyl-coenzyme M + 2 Na(+)(out). It participates in one-carbon metabolism; methanogenesis from CO(2); methyl-coenzyme M from 5,10-methylene-5,6,7,8-tetrahydromethanopterin: step 2/2. Part of a complex that catalyzes the formation of methyl-coenzyme M and tetrahydromethanopterin from coenzyme M and methyl-tetrahydromethanopterin. This is an energy-conserving, sodium-ion translocating step. The chain is Tetrahydromethanopterin S-methyltransferase subunit A 1 from Methanothermobacter thermautotrophicus (strain ATCC 29096 / DSM 1053 / JCM 10044 / NBRC 100330 / Delta H) (Methanobacterium thermoautotrophicum).